Consider the following 92-residue polypeptide: Putative regulatory protein CA_C1717 (92 aa).

Belongs to the RemA family.

This is Putative regulatory protein CA_C1717 from Clostridium acetobutylicum (strain ATCC 824 / DSM 792 / JCM 1419 / IAM 19013 / LMG 5710 / NBRC 13948 / NRRL B-527 / VKM B-1787 / 2291 / W).